A 331-amino-acid polypeptide reads, in one-letter code: Ribosomal RNA small subunit methyltransferase C (331 aa).

The protein belongs to the methyltransferase superfamily. RsmC family. In terms of assembly, monomer.

The protein resides in the cytoplasm. It catalyses the reaction guanosine(1207) in 16S rRNA + S-adenosyl-L-methionine = N(2)-methylguanosine(1207) in 16S rRNA + S-adenosyl-L-homocysteine + H(+). Functionally, specifically methylates the guanine in position 1207 of 16S rRNA in the 30S particle. This is Ribosomal RNA small subunit methyltransferase C from Pseudomonas putida (strain W619).